A 237-amino-acid polypeptide reads, in one-letter code: Large ribosomal subunit protein bL25 (237 aa).

Residues 1–104 (MELTAKPRTP…SVPVHTTGRS (104 aa)) are N-terminal domain. Residues 105 to 189 (QGEVQGGLVD…ELEAEVQAAQ (85 aa)) are middle domain. A C-terminal domain region spans residues 190–237 (VAGLVAAGELSEEAAEAVLEGDASLEEVKAEASEDNAGTDSEDNSDAQ). The segment at 205 to 237 (EAVLEGDASLEEVKAEASEDNAGTDSEDNSDAQ) is disordered.

Belongs to the bacterial ribosomal protein bL25 family. CTC subfamily. As to quaternary structure, part of the 50S ribosomal subunit. Contacts proteins L11 and L16, the A site tRNA, and the 5S and 23S rRNAs.

In terms of biological role, this is one of 3 proteins that mediate the attachment of the 5S rRNA onto the large ribosomal subunit. This protein has three domains. The N-terminal one is bound on the solvent face, the middle domain fills the space between the 5S rRNA and the L11 arm contacting the 23S rRNA while the C-terminal domain is on the edge of the intersubunit interface and contacts the A site. The protein conformation changes upon binding of a tRNA mimic to the A site, although the mimic does not interact directly with CTC itself, consistent with CTCs presumed role in moderating A site binding. This is Large ribosomal subunit protein bL25 (rplY) from Deinococcus radiodurans (strain ATCC 13939 / DSM 20539 / JCM 16871 / CCUG 27074 / LMG 4051 / NBRC 15346 / NCIMB 9279 / VKM B-1422 / R1).